A 181-amino-acid chain; its full sequence is ATP synthase subunit delta (181 aa).

It belongs to the ATPase delta chain family. As to quaternary structure, F-type ATPases have 2 components, F(1) - the catalytic core - and F(0) - the membrane proton channel. F(1) has five subunits: alpha(3), beta(3), gamma(1), delta(1), epsilon(1). F(0) has three main subunits: a(1), b(2) and c(10-14). The alpha and beta chains form an alternating ring which encloses part of the gamma chain. F(1) is attached to F(0) by a central stalk formed by the gamma and epsilon chains, while a peripheral stalk is formed by the delta and b chains.

The protein localises to the cell membrane. In terms of biological role, f(1)F(0) ATP synthase produces ATP from ADP in the presence of a proton or sodium gradient. F-type ATPases consist of two structural domains, F(1) containing the extramembraneous catalytic core and F(0) containing the membrane proton channel, linked together by a central stalk and a peripheral stalk. During catalysis, ATP synthesis in the catalytic domain of F(1) is coupled via a rotary mechanism of the central stalk subunits to proton translocation. Functionally, this protein is part of the stalk that links CF(0) to CF(1). It either transmits conformational changes from CF(0) to CF(1) or is implicated in proton conduction. This Desulforamulus reducens (strain ATCC BAA-1160 / DSM 100696 / MI-1) (Desulfotomaculum reducens) protein is ATP synthase subunit delta.